Here is a 320-residue protein sequence, read N- to C-terminus: Aldose reductase (320 aa).

Residue tyrosine 60 is the Proton donor of the active site. Residue histidine 121 participates in substrate binding. 215–269 (SPLGSSEKNLAHDPVVEKVANKLNKTPGQVLIKWALQRGTSVIPKSSKDERIKEN) contacts NADP(+).

This sequence belongs to the aldo/keto reductase family.

The enzyme catalyses an alditol + NAD(+) = an aldose + NADH + H(+). The catalysed reaction is an alditol + NADP(+) = an aldose + NADPH + H(+). The protein is Aldose reductase of Hordeum vulgare (Barley).